We begin with the raw amino-acid sequence, 341 residues long: MNVKDFDFYLPEELIAQHPLEQRDSSRLMVLDKKTGEIKHKKFHDIIEYLNEGDTLVLNNTRVMPARLIGEKEGTGGKIEFLLLKRIEKDRWECLAKPGKSAKVGRKFTFGEGKLKAEVVEVEENGNRIVEFFYDGIFEEVLDSLGEMPLPPYIHERLEDRERYQTVYSKENGSAAAPTAGLHFTKELLQEIKNKGINIVYLTLHVGLGTFRPVKVESLEEHEMHSEFYMLSKESADIINETKKRGNAVISVGTTSTRTLETIGDENGFVKEQSGWTNIFIYPGYKFKVVDKLITNFHLPESTLIMLVSTLAGRENVMNAYEEAVNEKYRFFSFGDAMFIK.

It belongs to the QueA family. Monomer.

It is found in the cytoplasm. The catalysed reaction is 7-aminomethyl-7-carbaguanosine(34) in tRNA + S-adenosyl-L-methionine = epoxyqueuosine(34) in tRNA + adenine + L-methionine + 2 H(+). Its pathway is tRNA modification; tRNA-queuosine biosynthesis. In terms of biological role, transfers and isomerizes the ribose moiety from AdoMet to the 7-aminomethyl group of 7-deazaguanine (preQ1-tRNA) to give epoxyqueuosine (oQ-tRNA). This Clostridium beijerinckii (strain ATCC 51743 / NCIMB 8052) (Clostridium acetobutylicum) protein is S-adenosylmethionine:tRNA ribosyltransferase-isomerase.